Consider the following 259-residue polypeptide: Sugar fermentation stimulation protein homolog (259 aa).

It belongs to the SfsA family.

This is Sugar fermentation stimulation protein homolog from Prochlorococcus marinus (strain MIT 9303).